The following is a 360-amino-acid chain: DNA replication and repair protein RecF (360 aa).

30–37 (GHNGSGKT) contributes to the ATP binding site.

Belongs to the RecF family.

The protein resides in the cytoplasm. In terms of biological role, the RecF protein is involved in DNA metabolism; it is required for DNA replication and normal SOS inducibility. RecF binds preferentially to single-stranded, linear DNA. It also seems to bind ATP. The protein is DNA replication and repair protein RecF of Shewanella pealeana (strain ATCC 700345 / ANG-SQ1).